The primary structure comprises 246 residues: Carboxy-S-adenosyl-L-methionine synthase (246 aa).

Residues Tyr-39, 64–66 (GCS), 89–90 (DN), 117–118 (DI), Asn-132, and Arg-199 contribute to the S-adenosyl-L-methionine site.

It belongs to the class I-like SAM-binding methyltransferase superfamily. Cx-SAM synthase family. In terms of assembly, homodimer.

It carries out the reaction prephenate + S-adenosyl-L-methionine = carboxy-S-adenosyl-L-methionine + 3-phenylpyruvate + H2O. Functionally, catalyzes the conversion of S-adenosyl-L-methionine (SAM) to carboxy-S-adenosyl-L-methionine (Cx-SAM). In Erwinia tasmaniensis (strain DSM 17950 / CFBP 7177 / CIP 109463 / NCPPB 4357 / Et1/99), this protein is Carboxy-S-adenosyl-L-methionine synthase.